The primary structure comprises 167 residues: MPFMKGREPIRRTLKYLNAGKLVLKDKVRIFSVNYNTYGAHHAGARDFVFWNIPQIQFKNPEVQVLTLKNMTPSPFVRCYFDDGRDMLIDLDSRNRNDIIDHLVKVVGKTREQLDAEERLKESKDNPANFGYGCGRHCICEIPGQVPCPGTVPLPDHMRGKILFAPK.

It belongs to the mitochondrion-specific ribosomal protein mS25 family. In terms of assembly, component of the mitochondrial ribosome small subunit (28S) which comprises a 12S rRNA and about 30 distinct proteins.

Its subcellular location is the mitochondrion. This Drosophila melanogaster (Fruit fly) protein is Small ribosomal subunit protein mS25 (mRpS25).